Consider the following 61-residue polypeptide: Large ribosomal subunit protein bL28 (61 aa).

The protein belongs to the bacterial ribosomal protein bL28 family.

The polypeptide is Large ribosomal subunit protein bL28 (rpmB) (Geobacillus stearothermophilus (Bacillus stearothermophilus)).